The chain runs to 401 residues: Succinyl-diaminopimelate desuccinylase (401 aa).

Histidine 82 contacts Zn(2+). Aspartate 84 is a catalytic residue. Residue aspartate 115 coordinates Zn(2+). Glutamate 149 serves as the catalytic Proton acceptor. 3 residues coordinate Zn(2+): glutamate 150, glutamate 178, and histidine 364.

It belongs to the peptidase M20A family. DapE subfamily. In terms of assembly, homodimer. Zn(2+) serves as cofactor. It depends on Co(2+) as a cofactor.

It carries out the reaction N-succinyl-(2S,6S)-2,6-diaminopimelate + H2O = (2S,6S)-2,6-diaminopimelate + succinate. Its pathway is amino-acid biosynthesis; L-lysine biosynthesis via DAP pathway; LL-2,6-diaminopimelate from (S)-tetrahydrodipicolinate (succinylase route): step 3/3. Catalyzes the hydrolysis of N-succinyl-L,L-diaminopimelic acid (SDAP), forming succinate and LL-2,6-diaminopimelate (DAP), an intermediate involved in the bacterial biosynthesis of lysine and meso-diaminopimelic acid, an essential component of bacterial cell walls. This is Succinyl-diaminopimelate desuccinylase from Verminephrobacter eiseniae (strain EF01-2).